Here is a 284-residue protein sequence, read N- to C-terminus: 2-dehydro-3-deoxyphosphooctonate aldolase (284 aa).

Belongs to the KdsA family.

It is found in the cytoplasm. The enzyme catalyses D-arabinose 5-phosphate + phosphoenolpyruvate + H2O = 3-deoxy-alpha-D-manno-2-octulosonate-8-phosphate + phosphate. Its pathway is carbohydrate biosynthesis; 3-deoxy-D-manno-octulosonate biosynthesis; 3-deoxy-D-manno-octulosonate from D-ribulose 5-phosphate: step 2/3. It participates in bacterial outer membrane biogenesis; lipopolysaccharide biosynthesis. The polypeptide is 2-dehydro-3-deoxyphosphooctonate aldolase (Actinobacillus pleuropneumoniae serotype 7 (strain AP76)).